The primary structure comprises 222 residues: Germin-like protein subfamily 1 member 4 (222 aa).

The signal sequence occupies residues 1–24 (MEGLLQFLLAKIILLALASSFVYC). Cys34 and Cys50 are disulfide-bonded. Asn38 carries N-linked (GlcNAc...) asparagine glycosylation. One can recognise a Cupin type-1 domain in the interval 64–215 (SGLNVPGNTI…AFALDYNKVK (152 aa)). Mn(2+)-binding residues include His112 and His114. N-linked (GlcNAc...) asparagine glycosylation occurs at Asn139. His161 lines the Mn(2+) pocket.

This sequence belongs to the germin family. Oligomer (believed to be a pentamer but probably hexamer).

Its subcellular location is the secreted. It localises to the extracellular space. The protein resides in the apoplast. Its function is as follows. May play a role in plant defense. Probably has no oxalate oxidase activity even if the active site is conserved. The polypeptide is Germin-like protein subfamily 1 member 4 (Arabidopsis thaliana (Mouse-ear cress)).